A 140-amino-acid chain; its full sequence is Mediator of RNA polymerase II transcription subunit 21 (140 aa).

Residues 52–130 (EERERTLEEL…CDELILKLAQ (79 aa)) are a coiled coil.

This sequence belongs to the Mediator complex subunit 21 family. In terms of assembly, component of the Mediator complex.

The protein localises to the nucleus. Its function is as follows. Component of the Mediator complex, a coactivator involved in the regulated transcription of nearly all RNA polymerase II-dependent genes. Mediator functions as a bridge to convey information from gene-specific regulatory proteins to the basal RNA polymerase II transcription machinery. Mediator is recruited to promoters by direct interactions with regulatory proteins and serves as a scaffold for the assembly of a functional preinitiation complex with RNA polymerase II and the general transcription factors. This is Mediator of RNA polymerase II transcription subunit 21 (SRB7) from Yarrowia lipolytica (strain CLIB 122 / E 150) (Yeast).